The primary structure comprises 852 residues: Polyphosphate kinase (852 aa).

Disordered stretches follow at residues 1–36 (MATG…DRPI) and 58–82 (SHDP…SRRK). Over residues 20-36 (VARDHPGCGPHRLDRPI) the composition is skewed to basic and acidic residues. The span at 58-67 (SHDPAPSQSV) shows a compositional bias: polar residues. Asn131 lines the ATP pocket. A disordered region spans residues 251–303 (GDEIGPQRTPPPSDSLDNRVPSNLKRNSDTANQQPTPAENISAPEDGAEQTEP). An insert region spans residues 258-303 (RTPPPSDSLDNRVPSNLKRNSDTANQQPTPAENISAPEDGAEQTEP). Positions 270–289 (VPSNLKRNSDTANQQPTPAE) are enriched in polar residues. 2 residues coordinate Mg(2+): Arg524 and Arg554. The active-site Phosphohistidine intermediate is the His584. Residues Tyr617, Arg713, and His741 each coordinate ATP.

It belongs to the polyphosphate kinase 1 (PPK1) family. It depends on Mg(2+) as a cofactor. Post-translationally, an intermediate of this reaction is the autophosphorylated ppk in which a phosphate is covalently linked to a histidine residue through a N-P bond.

It catalyses the reaction [phosphate](n) + ATP = [phosphate](n+1) + ADP. Functionally, catalyzes the reversible transfer of the terminal phosphate of ATP to form a long-chain polyphosphate (polyP). The sequence is that of Polyphosphate kinase from Rhodopirellula baltica (strain DSM 10527 / NCIMB 13988 / SH1).